Reading from the N-terminus, the 73-residue chain is Tetrahydromethanopterin S-methyltransferase subunit G (73 aa).

Residues Ile-48–Ser-68 traverse the membrane as a helical segment.

This sequence belongs to the MtrG family. In terms of assembly, the complex is composed of 8 subunits; MtrA, MtrB, MtrC, MtrD, MtrE, MtrF, MtrG and MtrH.

Its subcellular location is the cell membrane. It carries out the reaction 5-methyl-5,6,7,8-tetrahydromethanopterin + coenzyme M + 2 Na(+)(in) = 5,6,7,8-tetrahydromethanopterin + methyl-coenzyme M + 2 Na(+)(out). The protein operates within one-carbon metabolism; methanogenesis from CO(2); methyl-coenzyme M from 5,10-methylene-5,6,7,8-tetrahydromethanopterin: step 2/2. In terms of biological role, part of a complex that catalyzes the formation of methyl-coenzyme M and tetrahydromethanopterin from coenzyme M and methyl-tetrahydromethanopterin. This is an energy-conserving, sodium-ion translocating step. The protein is Tetrahydromethanopterin S-methyltransferase subunit G of Methanosarcina acetivorans (strain ATCC 35395 / DSM 2834 / JCM 12185 / C2A).